The following is a 736-amino-acid chain: Zinc finger CCCH domain-containing protein 14 (736 aa).

Methionine 1 bears the N-acetylmethionine mark. The segment covering 77–103 has biased composition (polar residues); that stretch reads TTEPSSLKSPDTSIFDSNVPSNKSSFS. Residues 77–153 are disordered; sequence TTEPSSLKSP…RHSYDDGAST (77 aa). Serine 85 carries the post-translational modification Phosphoserine. Residues lysine 99, lysine 139, lysine 175, and lysine 198 each participate in a glycyl lysine isopeptide (Lys-Gly) (interchain with G-Cter in SUMO2) cross-link. Over residues 123–148 the composition is skewed to basic and acidic residues; that stretch reads RPEKRDSRVSTSSQEHKSTNVRHSYD. Serine 240 bears the Phosphoserine mark. Residues lysine 245, lysine 283, and lysine 295 each participate in a glycyl lysine isopeptide (Lys-Gly) (interchain with G-Cter in SUMO2) cross-link. A disordered region spans residues 308-350; it reads FSHDGEEEEEDEDYGTRVGSLSSSVSVPAKPERRPSLPPSKQA. Serine 309, serine 327, and serine 343 each carry phosphoserine. Lysine 357 is subject to N6-acetyllysine; alternate. A Glycyl lysine isopeptide (Lys-Gly) (interchain with G-Cter in SUMO2); alternate cross-link involves residue lysine 357. A compositionally biased stretch (polar residues) spans 367–380; sequence TKTTNYPAVPQKQT. A disordered region spans residues 367 to 386; sequence TKTTNYPAVPQKQTLPVAPR. Lysine 378 participates in a covalent cross-link: Glycyl lysine isopeptide (Lys-Gly) (interchain with G-Cter in SUMO2). Serine 390 and serine 409 each carry phosphoserine. Residues 400–420 form a disordered region; it reads QGQNRAPRISPPVKEEEAKGD. Residues lysine 413 and lysine 489 each participate in a glycyl lysine isopeptide (Lys-Gly) (interchain with G-Cter in SUMO2) cross-link. Residues serine 498, serine 515, serine 527, and serine 620 each carry the phosphoserine modification. C3H1-type zinc fingers lie at residues 595 to 620, 621 to 640, 641 to 656, 682 to 699, and 701 to 719; these read EKLL…HPIS, PCKA…VHPN, CKYD…PFTH, CRYF…YHPK, and CRFN…HPTI.

The protein belongs to the ZC3H14 family. Homodimer; facilitating circular RNAs (circRNAs) formation. Associates with the spliceosome. Interacts with HOOK2. Interacts with ZFC3H1 in a RNase-sensitive manner.

The protein resides in the nucleus speckle. RNA-binding protein involved in the biogenesis of circular RNAs (circRNAs), which are produced by back-splicing circularization of pre-mRNAs. Acts by binding to both exon-intron boundary and 3'-UTR of pre-mRNAs to promote circRNA biogenesis through dimerization and the association with the spliceosome. Required for spermatogenesis via involvement in circRNA biogenesis. Regulates the pre-mRNA processing of ATP5MC1; preventing its degradation. Also binds the poly(A) tail of mRNAs; controlling poly(A) length in neuronal cells. The polypeptide is Zinc finger CCCH domain-containing protein 14 (Rattus norvegicus (Rat)).